Reading from the N-terminus, the 224-residue chain is MGKENSKVVVLDFWASPYAMRTKVALREKGVEFEVQEEDLWNKSELLLKSNPVHKKVPVLIHNNTPISESLIQVQYIDETWTDAASFLPSDPQSRATARFWADYADKTISFEGGRKIWGNKKGEEQEKGKKEFLESLKVLEAELGDKSYFGGETFGYVDITLVPFYSWFYALEKCGDFSVEAECPKIVAWGKRCVERNSVAATLPESEKVYQQVLKLRQIFGVE.

The GST N-terminal domain maps to 6–85 (SKVVVLDFWA…YIDETWTDAA (80 aa)). Glutathione contacts are provided by residues 16-17 (SP), 42-43 (NK), 56-57 (KV), and 69-70 (ES). The region spanning 91–217 (DPQSRATARF…EKVYQQVLKL (127 aa)) is the GST C-terminal domain. The residue at position 154 (Thr-154) is a Phosphothreonine.

It belongs to the GST superfamily. Tau family.

It is found in the cytoplasm. It localises to the cytosol. The catalysed reaction is RX + glutathione = an S-substituted glutathione + a halide anion + H(+). Functionally, may be involved in the conjugation of reduced glutathione to a wide number of exogenous and endogenous hydrophobic electrophiles and have a detoxification role against certain herbicides. This is Glutathione S-transferase U28 (GSTU28) from Arabidopsis thaliana (Mouse-ear cress).